Here is a 528-residue protein sequence, read N- to C-terminus: Tyrosine--tRNA ligase, cytoplasmic (528 aa).

M1 carries the post-translational modification N-acetylmethionine. The residue at position 2 (G2) is an N-acetylglycine; in Tyrosine--tRNA ligase, cytoplasmic, N-terminally processed. Y39 contacts L-tyrosine. Trans-resveratrol is bound at residue Y39. Residues 44 to 52 (TTGKPHVAY) carry the 'HIGH' region motif. Positions 166, 170, 173, and 188 each coordinate L-tyrosine. Q170 and D173 together coordinate trans-resveratrol. N6-acetyllysine is present on K197. Residue S205 is modified to Phosphoserine. K206 carries the post-translational modification N6-acetyllysine. The short motif at 222-226 (KMSSS) is the 'KMSKS' region element. Positions 242 to 247 (KKKLKK) match the Nuclear localization signal motif. The tract at residues 339 to 363 (AAYPDPSKQKPMAKGPAKNSEPEEV) is disordered. Residues 364–468 (IPSRLDIRVG…AGSAPGEHVF (105 aa)) enclose the tRNA-binding domain. The residue at position 386 (S386) is a Phosphoserine. N6-acetyllysine is present on residues K474, K482, and K490.

The protein belongs to the class-I aminoacyl-tRNA synthetase family. As to quaternary structure, homodimer. Interacts (when binding to resveratrol) with PARP1; interaction stimulates the poly-ADP-ribosyltransferase activity of PARP1.

The protein localises to the cytoplasm. It is found in the nucleus. The enzyme catalyses tRNA(Tyr) + L-tyrosine + ATP = L-tyrosyl-tRNA(Tyr) + AMP + diphosphate + H(+). With respect to regulation, resveratrol strongly inhibits the tyrosine--tRNA ligase activity. Tyrosine--tRNA ligase that catalyzes the attachment of tyrosine to tRNA(Tyr) in a two-step reaction: tyrosine is first activated by ATP to form Tyr-AMP and then transferred to the acceptor end of tRNA(Tyr). Also acts as a positive regulator of poly-ADP-ribosylation in the nucleus, independently of its tyrosine--tRNA ligase activity. Activity is switched upon resveratrol-binding: resveratrol strongly inhibits the tyrosine--tRNA ligase activity and promotes relocalization to the nucleus, where YARS1 specifically stimulates the poly-ADP-ribosyltransferase activity of PARP1. The polypeptide is Tyrosine--tRNA ligase, cytoplasmic (Homo sapiens (Human)).